We begin with the raw amino-acid sequence, 381 residues long: GDP-mannose transporter (381 aa).

Residues 1–39 (MVESKKTDDYAIEMDKIDQGSKNFEAAAPPQPRSVPSSS) are Cytoplasmic-facing. A helical membrane pass occupies residues 40 to 60 (LSGNPVLPVLAYCGSSILMTV). Residues 61–68 (MNKYVLSG) lie on the Lumenal side of the membrane. Residues 69-89 (LDFNLNFFLLCVQSIVCIIAI) form a helical membrane-spanning segment. At 90–109 (QTCKFCGLITYRDFSADEAK) the chain is on the cytoplasmic side. A helical transmembrane segment spans residues 110 to 126 (KWFPISLLLIGMIYTGS). Residues 127–133 (KALQFLS) lie on the Lumenal side of the membrane. The helical transmembrane segment at 134–150 (IPVYTIFKNLTIILIAY) threads the bilayer. Residues 151–159 (GEVLWFGGS) lie on the Cytoplasmic side of the membrane. The helical transmembrane segment at 160–181 (VTGLTLFSFGLMVLSSIIAAWA) threads the bilayer. The Lumenal segment spans residues 182–199 (DIKHAVESSGDTSAQVST). The chain crosses the membrane as a helical span at residues 200–220 (LNAGYIWMLINCLCTSSYVLG). The Cytoplasmic segment spans residues 221–232 (MRKRIKLTNFKD). The helical transmembrane segment at 233-253 (FDTMFYNNLLSIPVLVVLTGL) threads the bilayer. The Lumenal segment spans residues 254–273 (MEDWSSANIDRNFPQADRSS). Residues 274–294 (IMFAMILSGLSSVFISYTSAW) form a helical membrane-spanning segment. At 295–302 (CVRVTSST) the chain is on the cytoplasmic side. The helical transmembrane segment at 303–323 (TYSMVGALNKLPIALSGLIFF) threads the bilayer. Residues 324–326 (DAP) lie on the Lumenal side of the membrane. The helical transmembrane segment at 327 to 347 (VTFPSVSAIAVGFVSGIVYAI) threads the bilayer. Topologically, residues 348 to 381 (AKIKQNAKPKTGVLPTSNPLVSASSQSMRDSLRS) are cytoplasmic.

This sequence belongs to the TPT transporter family. SLC35D subfamily. Homooligomer.

The protein resides in the golgi apparatus membrane. It localises to the cytoplasmic vesicle membrane. Its subcellular location is the endoplasmic reticulum membrane. Its function is as follows. Involved in the import of GDP-mannose from the cytoplasm into the Golgi lumen. In Aspergillus oryzae (strain ATCC 42149 / RIB 40) (Yellow koji mold), this protein is GDP-mannose transporter (gmt1).